Reading from the N-terminus, the 250-residue chain is Large ribosomal subunit protein uL13c (250 aa).

Residues Met-1–Ala-47 constitute a chloroplast transit peptide.

In terms of assembly, component of the chloroplast large ribosomal subunit (LSU). Mature 70S chloroplast ribosomes of higher plants consist of a small (30S) and a large (50S) subunit. The 30S small subunit contains 1 molecule of ribosomal RNA (16S rRNA) and 24 different proteins. The 50S large subunit contains 3 rRNA molecules (23S, 5S and 4.5S rRNA) and 33 different proteins.

It localises to the plastid. The protein localises to the chloroplast. Component of the chloroplast ribosome (chloro-ribosome), a dedicated translation machinery responsible for the synthesis of chloroplast genome-encoded proteins, including proteins of the transcription and translation machinery and components of the photosynthetic apparatus. The protein is Large ribosomal subunit protein uL13c (RPL13) of Spinacia oleracea (Spinach).